We begin with the raw amino-acid sequence, 31 residues long: Sarcolipin (31 aa).

Topologically, residues 1–7 are cytoplasmic; that stretch reads MERSTRE. The helical transmembrane segment at 8-26 threads the bilayer; it reads LCLNFTVVLITVILIWLLV. The Lumenal portion of the chain corresponds to 27-31; sequence RSYQY.

It belongs to the sarcolipin family. As to quaternary structure, homooligomer. Can also form heterooligomers with other sarcoplasmic/endoplasmic reticulum calcium ATPase (SERCA) regulators ARLN, ERLN, PLN and STRIT1/DWORF. Monomer. Interacts with calcium ATPase ATP2A1/SERCA1. Interacts as a monomer with ATP2A2/SERCA2; the interaction decreases ATP2A2 Ca(2+) affinity. Interacts with VMP1; VMP1 competes with PLN and SLN to prevent them from forming an inhibitory complex with ATP2A2. Skeletal muscle (at protein level).

It localises to the sarcoplasmic reticulum membrane. Its subcellular location is the endoplasmic reticulum membrane. In terms of biological role, reversibly inhibits the activity of ATP2A1/SERCA1 and ATP2A2/SERCA2 in sarcoplasmic reticulum by decreasing the apparent affinity of the ATPase for Ca(2+). Also inhibits the activity of ATP2A3/SERCA3. Modulates calcium re-uptake during muscle relaxation and plays an important role in calcium homeostasis in muscle. Required for muscle-based, non-shivering thermogenesis. The sequence is that of Sarcolipin (SLN) from Oryctolagus cuniculus (Rabbit).